Consider the following 154-residue polypeptide: Small ribosomal subunit protein bS16 (154 aa).

Low complexity predominate over residues 111 to 121 (AAAGLAEAPTK). Positions 111–154 (AAAGLAEAPTKPAKKAAKAEAAPKTDEAAPKTEEQAGAGSGEQG) are disordered. The span at 127-144 (AKAEAAPKTDEAAPKTEE) shows a compositional bias: basic and acidic residues.

This sequence belongs to the bacterial ribosomal protein bS16 family.

This chain is Small ribosomal subunit protein bS16, found in Salinispora tropica (strain ATCC BAA-916 / DSM 44818 / JCM 13857 / NBRC 105044 / CNB-440).